The sequence spans 422 residues: Osteomodulin (422 aa).

Residues 1-20 (MGFSSLVCVLFFFLGVKVYC) form the signal peptide. Residues 21-27 (QYESYQW) constitute a propeptide that is removed on maturation. Residues Y22, Y25, Y31, Y39, Y51, and Y77 each carry the sulfotyrosine modification. The LRRNT domain maps to 53–91 (APFHQHTLGCASECFCPPNFPSSMYCDNRKLKTIPNIPA). LRR repeat units lie at residues 92–113 (HIQQ…SFIN), 116–129 (HLKE…KIKS), 142–164 (NLLQ…PKSL), 165–184 (ERIF…AVNG), 187–207 (NLTM…QEKV), 213–233 (KLMQ…GLPS), 234–255 (SLMY…YFNK), 258–280 (KLHA…FNLS), 281–294 (NLIE…KLKQ), 301–322 (NLEH…VMCP), and 331–353 (HLTH…IFLC). N-linked (GlcNAc...) asparagine glycans are attached at residues N113 and N121. An N-linked (GlcNAc...) asparagine glycan is attached at N187. 2 N-linked (GlcNAc...) asparagine glycosylation sites follow: N242 and N278. Residue N316 is glycosylated (N-linked (GlcNAc...) asparagine). A disulfide bond links C321 and C353. The tract at residues 385–422 (DDGDSEDHDDHHEGPEEEGTEENIDAHYYGSQEWQETI) is disordered. Sulfotyrosine is present on residues Y412 and Y413.

This sequence belongs to the small leucine-rich proteoglycan (SLRP) family. SLRP class II subfamily. In terms of assembly, binds the alpha(V)beta(3)-integrin. Post-translationally, the N-terminus is blocked. In terms of processing, glycosylated; contains keratan sulfate. Sulfated on tyrosine residue(s). As to expression, bone specific (at protein level).

The protein localises to the secreted. It localises to the extracellular space. It is found in the extracellular matrix. Functionally, may be implicated in biomineralization processes. Has a function in binding of osteoblasts via the alpha(V)beta(3)-integrin. The polypeptide is Osteomodulin (OMD) (Bos taurus (Bovine)).